The chain runs to 255 residues: MSTDLHWQTQGQGPDLVLLHGWGMNGAVWQQVVERLELHFRLHVVDLPGYGHSAHLHAASLEEIAQQLLEHAPKQAIWVGWSLGGLVATHMALHHADYVSKLVTVASSPKFAAEARWRGIQPQVLSAFTEQLSEDFHTTVERFMALQAMGSPSARQDVKNLKQAVFSRPQPNPQSLLAGLQMLAEVDLRDHLPHLTMPMLRLYGRLDGLVPIKVAQDLEKVLPASEQFIFTQSSHAPFITEPESFCHQLLSFAGK.

In terms of domain architecture, AB hydrolase-1 spans 16 to 242 (LVLLHGWGMN…SSHAPFITEP (227 aa)). Substrate is bound by residues W22, 82 to 83 (SL), and 143 to 147 (FMALQ). S82 serves as the catalytic Nucleophile. Catalysis depends on residues D207 and H235. H235 is a substrate binding site.

It belongs to the AB hydrolase superfamily. Carboxylesterase BioH family. Monomer.

It is found in the cytoplasm. The enzyme catalyses 6-carboxyhexanoyl-[ACP] methyl ester + H2O = 6-carboxyhexanoyl-[ACP] + methanol + H(+). Its pathway is cofactor biosynthesis; biotin biosynthesis. Functionally, the physiological role of BioH is to remove the methyl group introduced by BioC when the pimeloyl moiety is complete. It allows to synthesize pimeloyl-ACP via the fatty acid synthetic pathway through the hydrolysis of the ester bonds of pimeloyl-ACP esters. The chain is Pimeloyl-[acyl-carrier protein] methyl ester esterase from Vibrio vulnificus (strain CMCP6).